The chain runs to 444 residues: Protein EMP46 (444 aa).

Residues 1–46 (MTTRKTASSLQLLGKITGTKAGTKQKKMNFINGLIWLYMCVWMVHG) form the signal peptide. At 47–408 (KVTQKDELKW…YGKQTKGHDE (362 aa)) the chain is on the lumenal side. The region spanning 52–269 (DELKWNKGYS…EILKMKLYDG (218 aa)) is the L-type lectin-like domain. Residue Tyr177 coordinates K(+). Cys196 and Cys230 are disulfide-bonded. Residues 409–429 (IFSKISVWLALLIFIMITLAY) form a helical membrane-spanning segment. Residues 429–432 (YYMF) form a mediates the interactions with COPI and COPII coat complexes region. Over 430 to 444 (YMFRINQDIKKVKLL) the chain is Cytoplasmic. Residues 440 to 444 (KVKLL) carry the Di-lysine motif motif.

Belongs to the EMP46/EMP47 family. In terms of assembly, interacts with EMP47 in the endoplasmic reticulum membrane in order to be transported to the Golgi apparatus. Interacts with the coatomer proteins COP1, SEC21 and SEC23.

The protein resides in the golgi apparatus membrane. It localises to the endoplasmic reticulum membrane. Functionally, involved in the secretion of glycoproteins and in nucleus architecture and gene silencing. In Saccharomyces cerevisiae (strain ATCC 204508 / S288c) (Baker's yeast), this protein is Protein EMP46 (EMP46).